The primary structure comprises 142 residues: HTH-type transcriptional regulator LysM (142 aa).

In terms of domain architecture, HTH asnC-type spans 6-69 (IDESDLKILE…ELENEIRAIV (64 aa)). Residues 25-44 (YTLIAKELKVSEAAIRKRIE) constitute a DNA-binding region (H-T-H motif).

In terms of assembly, homotetramer.

Its subcellular location is the cytoplasm. The protein operates within amino-acid biosynthesis; L-lysine biosynthesis via AAA pathway [regulation]. Its function is as follows. In the absence or at low concentrations of lysine, activates the biosynthesis of this amino acid via the alpha-aminoadipate (AAA) pathway. This Saccharolobus solfataricus (strain ATCC 35092 / DSM 1617 / JCM 11322 / P2) (Sulfolobus solfataricus) protein is HTH-type transcriptional regulator LysM (lysM).